The following is a 388-amino-acid chain: DNA replication and repair protein RecF (388 aa).

30–37 lines the ATP pocket; it reads GANGNGKT.

Belongs to the RecF family.

It localises to the cytoplasm. In terms of biological role, the RecF protein is involved in DNA metabolism; it is required for DNA replication and normal SOS inducibility. RecF binds preferentially to single-stranded, linear DNA. It also seems to bind ATP. In Nocardia farcinica (strain IFM 10152), this protein is DNA replication and repair protein RecF.